The primary structure comprises 215 residues: MTTSATPMAAVDLLQQALNSNIIPNQEYLLQGSILDSAAEHLLHRLRGLCDNVDTGPEAFADYEMCLSLKVPNEKTPVMTVRVRKAQDTDAPYQLRYIGQPELGDRNRPTLVRSSLDIACTPHVVDFLTEMGFRVDFEYITKGYMFRKGRMKVTVSKIFKVNSSEPISQSYLVELSVLAPTGQDVIADDMRIFAEQLKPLVQLEKIDYKRFAQMP.

The protein belongs to the Mediator complex subunit 18 family. Component of the Mediator complex.

Its subcellular location is the nucleus. In terms of biological role, component of the Mediator complex, a coactivator involved in the regulated transcription of nearly all RNA polymerase II-dependent genes. Mediator functions as a bridge to convey information from gene-specific regulatory proteins to the basal RNA polymerase II transcription machinery. Mediator is recruited to promoters by direct interactions with regulatory proteins and serves as a scaffold for the assembly of a functional preinitiation complex with RNA polymerase II and the general transcription factors. In Aedes aegypti (Yellowfever mosquito), this protein is Mediator of RNA polymerase II transcription subunit 18 (MED18).